Consider the following 129-residue polypeptide: ATP synthase epsilon chain (129 aa).

The protein belongs to the ATPase epsilon chain family. F-type ATPases have 2 components, CF(1) - the catalytic core - and CF(0) - the membrane proton channel. CF(1) has five subunits: alpha(3), beta(3), gamma(1), delta(1), epsilon(1). CF(0) has three main subunits: a, b and c.

It is found in the cell inner membrane. Its function is as follows. Produces ATP from ADP in the presence of a proton gradient across the membrane. The sequence is that of ATP synthase epsilon chain from Nitratiruptor sp. (strain SB155-2).